The following is a 537-amino-acid chain: Trypsin-resistant surface T6 protein (537 aa).

An N-terminal signal peptide occupies residues 1–22; the sequence is MLACLAILAVVGLGMTRVSALS. A hydrophilic region spans residues 310-330; that stretch reads GNTYDNLDKKPDKGNGITSKE. Positions 504–508 match the LPXTG sorting signal motif; sequence LPSTG. Thr-507 carries the pentaglycyl murein peptidoglycan amidated threonine modification. The propeptide at 508–537 is removed by sortase; it reads GSIGTYLFKAIGSAAMIGAIGIYIVKRRKA.

It is found in the secreted. Its subcellular location is the cell wall. The sequence is that of Trypsin-resistant surface T6 protein (tee6) from Streptococcus pyogenes serotype M6 (strain ATCC BAA-946 / MGAS10394).